Consider the following 430-residue polypeptide: Probable beta-1,3-galactosyl-O-glycosyl-glycoprotein beta-1,6-N-acetylglucosaminyltransferase 7 (430 aa).

Over 1–8 the chain is Cytoplasmic; the sequence is MSQLRATK. The helical; Signal-anchor for type II membrane protein transmembrane segment at 9-25 threads the bilayer; that stretch reads SGLVVRAVICIFIFLYL. Residues 26–430 are Extracellular-facing; that stretch reads RNPTPAESEE…QSHFNMRLNR (405 aa). 4 cysteine pairs are disulfide-bonded: cysteine 53/cysteine 205, cysteine 139/cysteine 354, cysteine 160/cysteine 187, and cysteine 363/cysteine 395. The N-linked (GlcNAc...) asparagine glycan is linked to asparagine 87. Asparagine 272 is a glycosylation site (N-linked (GlcNAc...) asparagine).

It belongs to the glycosyltransferase 14 family.

It localises to the golgi apparatus membrane. Its pathway is protein modification; protein glycosylation. In terms of biological role, probable glycosyltransferase. In Homo sapiens (Human), this protein is Probable beta-1,3-galactosyl-O-glycosyl-glycoprotein beta-1,6-N-acetylglucosaminyltransferase 7.